Here is a 598-residue protein sequence, read N- to C-terminus: Nuclear receptor subfamily 4 group A member 1 (598 aa).

Disordered regions lie at residues 1–50 (MPCI…PTAL) and 120–159 (LDET…GSFG). Composition is skewed to low complexity over residues 37-50 (LASP…PTAL) and 134-145 (SPCSAPSPSTPS). Residues 171 to 466 (RAWTEQLPKA…PAEGKLIFCS (296 aa)) are required for nuclear import. The segment at residues 264 to 339 (EGRCAVCGDN…VGMVKEVVRT (76 aa)) is a DNA-binding region (nuclear receptor). NR C4-type zinc fingers lie at residues 267-287 (CAVC…CEGC) and 303-327 (CLAN…FQKC). Residues 268–354 (AVCGDNASCQ…RRGRLPSKPK (87 aa)) form a required for binding NBRE-containing DNA region. Residues 299-361 (AKYICLANKD…KPKQPPDASP (63 aa)) form a required for the interaction with RXRA region. Residue serine 341 is modified to Phosphoserine; by PKA. Positions 341–361 (SLKGRRGRLPSKPKQPPDASP) are disordered. The residue at position 351 (serine 351) is a Phosphoserine; by PKA, RPS6KA1 and RPS6KA3. The NR LBD domain occupies 360–595 (SPANLLTSLV…PIVDKIFMDT (236 aa)). Positions 521–544 (PRRVEELQNRIASCLKEHVSAVAG) are binds lipopolysaccharide. The tract at residues 584–595 (PPPIVDKIFMDT) is AF-2.

The protein belongs to the nuclear hormone receptor family. NR4 subfamily. As to quaternary structure, binds the NGFI-B response element (NBRE) as a monomer. Binds the Nur response element (NurRE), consisting of two inverse NBRE-related octanucleotide repeats separated by 6 base-pairs, as a dimer. Interacts (via N-terminus) with NLRP3 (via LRR repeat domain); the interaction is direct, requires binding of NR4A1/Nur77 to NBRE-containing dsDNA and lipopolysaccharide, and leads to non-canonical NLRP3 inflammasome activation. Interacts with GADD45GIP1. Interacts with STK11. Heterodimer (via DNA-binding domain) with RXRA (via C-terminus); DNA-binding of the heterodimer is enhanced by 9-cis retinoic acid. Competes for the RXRA interaction with EP300 and thereby attenuates EP300 mediated acetylation of RXRA. Interacts with NCOA1. Interacts with NCOA2. Interacts with NCOA3. Zn(2+) is required as a cofactor. Phosphorylated at Ser-351 by RPS6KA1 and RPS6KA3 in response to mitogenic or stress stimuli. In terms of processing, acetylated by p300/CBP, acetylation increases stability. Deacetylated by HDAC1.

Its subcellular location is the cytoplasm. It is found in the cytosol. It localises to the nucleus. The protein localises to the mitochondrion. Its function is as follows. Orphan nuclear receptor. Binds the NGFI-B response element (NBRE) 5'-AAAGGTCA-3'. Binds 9-cis-retinoic acid outside of its ligand-binding (NR LBD) domain. Participates in energy homeostasis by sequestrating the kinase STK11 in the nucleus, thereby attenuating cytoplasmic AMPK activation. Regulates the inflammatory response in macrophages by regulating metabolic adaptations during inflammation, including repressing the transcription of genes involved in the citric acid cycle (TCA). Inhibits NF-kappa-B signaling by binding to low-affinity NF-kappa-B binding sites, such as at the IL2 promoter. May act concomitantly with NR4A2 in regulating the expression of delayed-early genes during liver regeneration. Plays a role in the vascular response to injury. In terms of biological role, in the cytosol, upon its detection of both bacterial lipopolysaccharide (LPS) and NBRE-containing mitochondrial DNA released by GSDMD pores during pyroptosis, it promotes non-canonical NLRP3 inflammasome activation by stimulating association of NLRP3 and NEK7. The chain is Nuclear receptor subfamily 4 group A member 1 (NR4A1) from Canis lupus familiaris (Dog).